A 255-amino-acid chain; its full sequence is Homeobox protein Hox-D4 (255 aa).

A disordered region spans residues 31-128 (EQGADYYGGG…KQPPPGTALK (98 aa)). Residues 94–109 (EPCPAPPAPPPAPLPG) are compositionally biased toward pro residues. Positions 133–138 (VYPWMK) match the Antp-type hexapeptide motif. The segment at residues 154 to 213 (PKRSRTAYTRQQVLELEKEFHFNRYLTRRRRIEIAHTLCLSERQIKIWFQNRRMKWKKDH) is a DNA-binding region (homeobox). The tract at residues 212-255 (DHKLPNTKGRSSSSSSSSSCSSSVAPSQHLQPMAKDHHTDLTTL) is disordered. A compositionally biased stretch (low complexity) spans 222 to 234 (SSSSSSSSSCSSS). The span at 245–255 (AKDHHTDLTTL) shows a compositional bias: basic and acidic residues.

It belongs to the Antp homeobox family. Deformed subfamily. As to quaternary structure, forms a DNA-binding heterodimer with transcription factor PBX1.

It localises to the nucleus. Sequence-specific transcription factor which is part of a developmental regulatory system that provides cells with specific positional identities on the anterior-posterior axis. The sequence is that of Homeobox protein Hox-D4 (HOXD4) from Gorilla gorilla gorilla (Western lowland gorilla).